A 318-amino-acid polypeptide reads, in one-letter code: NADH-ubiquinone oxidoreductase chain 1 (318 aa).

A run of 8 helical transmembrane segments spans residues 3–23, 69–89, 100–120, 135–155, 171–191, 223–243, 253–273, and 293–313; these read LINV…LTLL, LMFT…WIPI, LGVL…LWSG, AVAQ…SIMM, HMWL…STLA, FFLA…ILFF, ELHT…FLWV, and FLPL…TFAG.

It belongs to the complex I subunit 1 family.

It localises to the mitochondrion inner membrane. The enzyme catalyses a ubiquinone + NADH + 5 H(+)(in) = a ubiquinol + NAD(+) + 4 H(+)(out). Its function is as follows. Core subunit of the mitochondrial membrane respiratory chain NADH dehydrogenase (Complex I) that is believed to belong to the minimal assembly required for catalysis. Complex I functions in the transfer of electrons from NADH to the respiratory chain. The immediate electron acceptor for the enzyme is believed to be ubiquinone. In Dasypus novemcinctus (Nine-banded armadillo), this protein is NADH-ubiquinone oxidoreductase chain 1 (MT-ND1).